The primary structure comprises 37 residues: Esculentin-2P (37 aa).

The cysteines at positions 31 and 37 are disulfide-linked.

As to expression, expressed by the skin glands.

Its subcellular location is the secreted. Its function is as follows. Antibacterial activity against Gram-negative bacterium E.coli. The protein is Esculentin-2P of Lithobates pipiens (Northern leopard frog).